We begin with the raw amino-acid sequence, 172 residues long: Putative F-box protein At3g13825 (172 aa).

The F-box domain maps to 1 to 51; the sequence is MTTLSNLSVDLVGEIFSRVPLISLSEVRCTCTTWNTLSWNILSENYVFGKA.

This chain is Putative F-box protein At3g13825, found in Arabidopsis thaliana (Mouse-ear cress).